The following is a 161-amino-acid chain: Nucleotide-binding protein Rpic_2826 (161 aa).

It belongs to the YajQ family.

In terms of biological role, nucleotide-binding protein. The chain is Nucleotide-binding protein Rpic_2826 from Ralstonia pickettii (strain 12J).